We begin with the raw amino-acid sequence, 145 residues long: Zinc finger C2H2 protein ECU06_1150 (145 aa).

The segment at 35 to 57 (KDCARYGEAQASKHALLAHARRH) adopts a C2H2-type 1; atypical zinc-finger fold. The C2H2-type 2 zinc-finger motif lies at 63-85 (FECHLCGKDYTRSDPLKKHLLRH).

The polypeptide is Zinc finger C2H2 protein ECU06_1150 (Encephalitozoon cuniculi (strain GB-M1) (Microsporidian parasite)).